A 170-amino-acid chain; its full sequence is FMRFamide-like neuropeptides 6 (170 aa).

A signal peptide spans 1–19 (MNSRGLILTLGVVIAVAFA). The residue at position 20 (Q20) is a Pyrrolidone carboxylic acid. Position 39 is a phenylalanine amide (F39). Residues 42-51 (SDGGNPMEME) constitute a propeptide that is removed on maturation. F60 carries the post-translational modification Phenylalanine amide. Positions 63–81 (RSSGGDEQELVGGDDIDME) are excised as a propeptide. The residue at position 90 (F90) is a Phenylalanine amide. A propeptide spanning residues 93-104 (RSGPQEDDMPME) is cleaved from the precursor. F113 is subject to Phenylalanine amide. Positions 116-136 (RSSDMEVIGNEGVDGDAHDLF) are excised as a propeptide. The residue at position 145 (F145) is a Phenylalanine amide. Positions 148–159 (RSMGEEEDHDMM) are excised as a propeptide. The tract at residues 150–170 (MGEEEDHDMMKRKSAYMRFGR) is disordered. The segment covering 159 to 170 (MKRKSAYMRFGR) has biased composition (basic residues). A Phenylalanine amide modification is found at F168.

This sequence belongs to the FARP (FMRFamide related peptide) family. Each flp gene is expressed in a distinct set of neurons. Flp-6 is expressed in the ASE sensory neurons, AFD, ASG, PVT and I1 neurons.

The protein resides in the secreted. Functionally, FMRFamides and FMRFamide-like peptides are neuropeptides. KSAYMRF-amide has an excitatory effect on dissected pharyngeal myogenic muscle system. In Caenorhabditis elegans, this protein is FMRFamide-like neuropeptides 6.